Consider the following 192-residue polypeptide: uncharacterized protein (192 aa).

The Nudix hydrolase domain occupies 29–160; the sequence is HRQAAVLIPI…PLDIYRRGDS (132 aa). The Nudix box motif lies at 67–89; sequence GAVDDTDTSVIAAALREAEEEVA. Residues Glu-83 and Glu-87 each coordinate Mg(2+).

This sequence belongs to the Nudix hydrolase family. PCD1 subfamily. Mn(2+) serves as cofactor. Requires Mg(2+) as cofactor.

In terms of biological role, probably mediates the hydrolysis of some nucleoside diphosphate derivatives. This is an uncharacterized protein from Escherichia coli O7:K1 (strain IAI39 / ExPEC).